Reading from the N-terminus, the 310-residue chain is Tyrosine recombinase XerC (310 aa).

The Core-binding (CB) domain occupies 22–103 (SQMLEAIEDF…SVKSFSTWAV (82 aa)). The Tyr recombinase domain occupies 124–304 (NLPRVLGEVQ…SSQRLLEAFR (181 aa)). Active-site residues include Arg165, Lys189, His256, Arg259, and His282. The active-site O-(3'-phospho-DNA)-tyrosine intermediate is the Tyr291.

This sequence belongs to the 'phage' integrase family. XerC subfamily. In terms of assembly, forms a cyclic heterotetrameric complex composed of two molecules of XerC and two molecules of XerD.

The protein localises to the cytoplasm. Its function is as follows. Site-specific tyrosine recombinase, which acts by catalyzing the cutting and rejoining of the recombining DNA molecules. The XerC-XerD complex is essential to convert dimers of the bacterial chromosome into monomers to permit their segregation at cell division. It also contributes to the segregational stability of plasmids. This chain is Tyrosine recombinase XerC, found in Corynebacterium efficiens (strain DSM 44549 / YS-314 / AJ 12310 / JCM 11189 / NBRC 100395).